Here is a 282-residue protein sequence, read N- to C-terminus: 1-deoxy-11-beta-hydroxypentalenate dehydrogenase (282 aa).

12-36 (GAASGIGLALSARFARAGAGVVMAD) serves as a coordination point for NAD(+). Substrate is bound at residue Ser-144. Tyr-157 functions as the Proton acceptor in the catalytic mechanism. An NAD(+)-binding site is contributed by Lys-161. Residues 258 to 282 (PPPSPEEELWPVPKTTTATTATTKH) form a disordered region. The segment covering 267–282 (WPVPKTTTATTATTKH) has biased composition (low complexity).

The protein belongs to the short-chain dehydrogenases/reductases (SDR) family.

It catalyses the reaction 1-deoxy-11beta-hydroxypentalenate + NAD(+) = 1-deoxy-11-oxopentalenate + NADH + H(+). It functions in the pathway antibiotic biosynthesis; pentalenolactone biosynthesis. Catalyzes the oxidation of 1-deoxy-11-beta-hydroxypentalenic acid to 1-deoxy-11-oxopentalenic acid in the biosynthesis of pentalenolactone antibiotic. This chain is 1-deoxy-11-beta-hydroxypentalenate dehydrogenase (pntF), found in Streptomyces arenae.